The primary structure comprises 955 residues: Disintegrin and metalloproteinase domain-containing protein 19 (955 aa).

The signal sequence occupies residues 1 to 25; sequence MPGGAGAARLCLLAFALQPLRPRAA. The propeptide occupies 26–202; the sequence is REPGWTRGSE…QTKKRPRRMK (177 aa). The Cysteine switch signature appears at 130–137; the sequence is STCRGIRG. C132 provides a ligand contact to Zn(2+). An N-linked (GlcNAc...) asparagine glycan is attached at N144. Topologically, residues 203 to 699 are extracellular; that stretch reads REDLNSMKYV…IDSGPMPPES (497 aa). One can recognise a Peptidase M12B domain in the interval 210 to 408; that stretch reads KYVELYLVAD…GGGMCLSNMP (199 aa). 3 disulfides stabilise this stretch: C320-C403, C360-C387, and C361-C370. H345 is a Zn(2+) binding site. E346 is an active-site residue. Positions 349 and 355 each coordinate Zn(2+). The region spanning 416 to 502 is the Disintegrin domain; that stretch reads GRRCGNGYLE…HCPTNFYQMD (87 aa). N444 and N447 each carry an N-linked (GlcNAc...) asparagine glycan. Residues C474 and C494 are joined by a disulfide bond. The N-linked (GlcNAc...) asparagine glycan is linked to N645. Positions 650–682 constitute an EGF-like domain; it reads ETEGCGKKCNGHGVCNNNQNCHCLPGWAPPFCN. 3 disulfide bridges follow: C654–C664, C658–C670, and C672–C681. The chain crosses the membrane as a helical span at residues 700 to 720; sequence VGPVVAGVLVAILVLAVLMLM. Topologically, residues 721–955 are cytoplasmic; that stretch reads YYCCRQNNKL…AKHSCFLVPA (235 aa). The span at 753-771 shows a compositional bias: polar residues; sequence SQNSGTGHANPTFKLQTPQ. Positions 753-917 are disordered; sequence SQNSGTGHAN…LKVKAGTRGL (165 aa). Composition is skewed to pro residues over residues 787-796 and 833-844; these read SQPPPRPPPD and RPPPSRPIPPAP. The SH3-binding signature appears at 833–844; that stretch reads RPPPSRPIPPAP.

In terms of assembly, interacts with SH3PXD2A. Zn(2+) serves as cofactor. Post-translationally, the precursor is cleaved by a furin endopeptidase. As to expression, expressed in many normal organ tissues and several cancer cell lines.

It is found in the membrane. Participates in the proteolytic processing of beta-type neuregulin isoforms which are involved in neurogenesis and synaptogenesis, suggesting a regulatory role in glial cell. Also cleaves alpha-2 macroglobulin. May be involved in osteoblast differentiation and/or osteoblast activity in bone. This is Disintegrin and metalloproteinase domain-containing protein 19 (ADAM19) from Homo sapiens (Human).